Consider the following 208-residue polypeptide: MARYRGPVEKLERRFGVSLALKGERRLAGKSALDKRPYAPGQHGARKGKISEYGLQLREKQKAKFMYGVSEKQFRRLFAEAARREGNTGVLLIQLLEQRLDNVVYRMGFATTRRFARQLVTHGHVLVNGKRVDIPSFRVEAGAKIEIIEKSKNNPQITRAIELTAQTGIVAWVDVEKDKRFGIFTRKPEREEVVIPVEERFIVELYSK.

The S4 RNA-binding domain maps to Q98–L163.

It belongs to the universal ribosomal protein uS4 family. As to quaternary structure, part of the 30S ribosomal subunit. Contacts protein S5. The interaction surface between S4 and S5 is involved in control of translational fidelity.

Its function is as follows. One of the primary rRNA binding proteins, it binds directly to 16S rRNA where it nucleates assembly of the body of the 30S subunit. Functionally, with S5 and S12 plays an important role in translational accuracy. This chain is Small ribosomal subunit protein uS4, found in Campylobacter jejuni subsp. jejuni serotype O:6 (strain 81116 / NCTC 11828).